A 603-amino-acid polypeptide reads, in one-letter code: F-box only protein 46 (603 aa).

Residues 20-54 form a disordered region; that stretch reads YSQNQPRPPSATLKPPVCPDTSSGTEPDHRPAHLE. Residues Ser21 and Ser67 each carry the phosphoserine modification. Disordered stretches follow at residues 111 to 163, 235 to 301, 332 to 359, and 396 to 442; these read GGSR…PTSS, EAQR…TRAK, EASE…ARDC, and TVSP…GTTD. The residue at position 347 (Thr347) is a Phosphothreonine. The segment covering 347-356 has biased composition (pro residues); it reads TPPAPPPPPA. The F-box domain maps to 470–522; that stretch reads RQYMLLLPEHVLVKIFSFLPTRALAALKCTCHHFKGIIEAFGVRATDSRWSRD.

Part of a SCF (SKP1-cullin-F-box) protein ligase complex SCF(FBXO46) composed of CUL1, SKP1, RBX1 and FBXO46. In terms of processing, phosphorylated by ATM in response to DNA damage, promoting ubiquitination and degradation by the SCF(FBXO31) complex. ATM-phosphorylated FBXO46 is ubiquitinated and degradaded by the SCF(FBXO31) complex in response to DNA damage.

Its pathway is protein modification; protein ubiquitination. In terms of biological role, substrate-recognition component of the SCF(FBXO46) protein ligase complex, which mediates the ubiquitination and degradation of target proteins. In absence of stress, the SCF(FBXO46) complex catalyzes ubiquitination and degradation of MTOR-phosphorylated FBXO31. This Rattus norvegicus (Rat) protein is F-box only protein 46 (Fbxo46).